Consider the following 315-residue polypeptide: Ribosomal protein L11 methyltransferase (315 aa).

Residues Thr-162, Gly-183, Asp-205, and Asn-248 each contribute to the S-adenosyl-L-methionine site.

Belongs to the methyltransferase superfamily. PrmA family.

It is found in the cytoplasm. The catalysed reaction is L-lysyl-[protein] + 3 S-adenosyl-L-methionine = N(6),N(6),N(6)-trimethyl-L-lysyl-[protein] + 3 S-adenosyl-L-homocysteine + 3 H(+). Methylates ribosomal protein L11. The protein is Ribosomal protein L11 methyltransferase of Enterococcus faecalis (strain ATCC 700802 / V583).